The following is a 501-amino-acid chain: Endosomal/lysosomal proton channel TMEM175 (501 aa).

Residues 1–20 are disordered; sequence MAAPRAATPGPGGGARKPEL. The Cytoplasmic portion of the chain corresponds to 1–31; sequence MAAPRAATPGPGGGARKPELDLELGSSTQTS. The chain crosses the membrane as a helical span at residues 32–54; that stretch reads HRLLAYSDALLSIIATVMILPVA. Positions 33 to 39 match the RxxxFSD motif 1 motif; it reads RLLAYSD. Residues 55 to 75 are Lumenal-facing; the sequence is HTKIHPDQKLGESVQQLLLTK. Positions 56–61 are short helix H1-1; the sequence is TKIHPD. Positions 63–69 are short helix H2-1; the sequence is KLGESVQ. Residues 76-98 form a helical membrane-spanning segment; sequence IAVYLMTFLIVTVAWAAHVRLFQ. The Cytoplasmic portion of the chain corresponds to 99 to 104; sequence VIELID. The helical transmembrane segment at 105 to 126 threads the bilayer; it reads DVLALLNLACMMIITFLPYTFS. At 127 to 136 the chain is on the lumenal side; sequence LMASFPGVPF. A helical membrane pass occupies residues 137 to 158; the sequence is GIFLFSVCAVVIGLIQAVIVVY. The Cytoplasmic segment spans residues 159–182; that stretch reads GFYHPHLLNQQIQVSENQNFYKRH. A helical transmembrane segment spans residues 183-203; sequence ILKIILRGPALCFLAAIFSFF. At 204-208 the chain is on the lumenal side; it reads FIPLS. The chain crosses the membrane as a helical span at residues 209-228; it reads YLLLGLVIVFPHLSRFITWC. The Cytoplasmic segment spans residues 229–257; the sequence is KTKIVGHRDEEEASYSLETFSFYLSEPLS. A helical membrane pass occupies residues 258–282; the sequence is KERVEAFSDGVYAIVATLLILDICE. The RxxxFSD motif 2 motif lies at 260–266; sequence RVEAFSD. Residues 283–309 are Lumenal-facing; the sequence is DNVPDPREVGEKFHGSLLEALSEYGPN. A short helix H1-2 region spans residues 288–296; that stretch reads PREVGEKFH. The interval 298-304 is short helix H2-2; the sequence is SLLEALS. A helical transmembrane segment spans residues 310 to 332; it reads YLAYFGSFVTIGLLWFVHHSLFL. Residues 333-338 lie on the Cytoplasmic side of the membrane; that stretch reads YVTKAT. Residues 339-360 form a helical membrane-spanning segment; that stretch reads RLMGLLNILSLAFIGGLPLAYQ. Residues 361-375 are Lumenal-facing; sequence LTSEFAEKSHNEIEA. Residues 376 to 396 traverse the membrane as a helical segment; it reads IQVSCVITFFASIFQFAIWTT. The Cytoplasmic portion of the chain corresponds to 397 to 416; sequence ALLHERETLHPFARYGGKEH. Residues 417 to 440 form a helical membrane-spanning segment; the sequence is AFMFAKLALYPCVSLGAFFLTCLL. Over 441-442 the chain is Lumenal; sequence SE. A helical membrane pass occupies residues 443–469; sequence FSTEIFHLMQIVIPFAFLALRIFVRIS. Residues 470–501 are Cytoplasmic-facing; that stretch reads LTVIKSVMSLSRRKVVLLEEEEACLSPTETHS.

It belongs to the TMEM175 family. Homodimer.

The protein resides in the endosome membrane. The protein localises to the lysosome membrane. The enzyme catalyses H(+)(in) = H(+)(out). It catalyses the reaction K(+)(in) = K(+)(out). Active at low pH (under pH 4.6): proton channel activity is activated by luminal side protons. Polyunsaturated fatty acids, such as arachidonic acid, also activate the channel activity. Its function is as follows. Proton-activated proton channel that catalyzes proton efflux from endosomes and lysosomes to maintain a steady-state pH. Activated at low pH (under pH 4.6) by luminal side protons: selectively mediates lysosomal proton release from lysosomes, eliciting a proton leak that balances V-ATPase activity to maintain pH homeostasis. Regulation of lumenal pH stability is required for autophagosome-lysosome fusion. Also acts as a potassium channel at higher pH, regulating potassium conductance in endosomes and lysosomes. The protein is Endosomal/lysosomal proton channel TMEM175 of Gallus gallus (Chicken).